A 214-amino-acid chain; its full sequence is Transmembrane emp24 domain-containing protein p24delta10 (214 aa).

Positions 1 to 24 are cleaved as a signal peptide; it reads MFLQSQKLWTMLLILAIWSPISHS. The Lumenal segment spans residues 25-181; sequence LHFDLHSGRT…QDLNRSTNTK (157 aa). The GOLD domain occupies 34-149; the sequence is TKCIAEDIKS…VEVMEFEVKS (116 aa). Residues 164-177 adopt a coiled-coil conformation; it reads LRDREEEMQDLNRS. At arginine 167 the chain carries Omega-N-methylated arginine. The N-linked (GlcNAc...) asparagine glycan is linked to asparagine 175. The helical transmembrane segment at 182–202 threads the bilayer; sequence MAWLSVLSFFVCIGVAGMQFL. Over 203-214 the chain is Cytoplasmic; it reads HLKTFFEKKKVI. The COPII vesicle coat-binding signature appears at 207–208; it reads FF. A COPI vesicle coat-binding motif is present at residues 207–214; that stretch reads FFEKKKVI.

This sequence belongs to the EMP24/GP25L family. In terms of assembly, probably oligomerizes with other members of the EMP24/GP25L family. Associates with the COPI vesicle coat (coatomer). Associates with the COPII vesicle coat (coatomer).

It localises to the endoplasmic reticulum membrane. Its subcellular location is the golgi apparatus. The protein localises to the cis-Golgi network membrane. It is found in the golgi stack membrane. Functionally, involved in vesicular protein trafficking. Mainly functions in the early secretory pathway. Thought to act as cargo receptor at the lumenal side for incorporation of secretory cargo molecules into transport vesicles and to be involved in vesicle coat formation at the cytoplasmic side. This Arabidopsis thaliana (Mouse-ear cress) protein is Transmembrane emp24 domain-containing protein p24delta10.